A 481-amino-acid chain; its full sequence is Proline--tRNA ligase (481 aa).

This sequence belongs to the class-II aminoacyl-tRNA synthetase family. ProS type 3 subfamily. In terms of assembly, homodimer.

The protein localises to the cytoplasm. It catalyses the reaction tRNA(Pro) + L-proline + ATP = L-prolyl-tRNA(Pro) + AMP + diphosphate. Functionally, catalyzes the attachment of proline to tRNA(Pro) in a two-step reaction: proline is first activated by ATP to form Pro-AMP and then transferred to the acceptor end of tRNA(Pro). The polypeptide is Proline--tRNA ligase (Chlorobium phaeobacteroides (strain DSM 266 / SMG 266 / 2430)).